The sequence spans 346 residues: Phosphoribosylformylglycinamidine cyclo-ligase (346 aa).

This sequence belongs to the AIR synthase family.

The protein resides in the cytoplasm. It carries out the reaction 2-formamido-N(1)-(5-O-phospho-beta-D-ribosyl)acetamidine + ATP = 5-amino-1-(5-phospho-beta-D-ribosyl)imidazole + ADP + phosphate + H(+). It functions in the pathway purine metabolism; IMP biosynthesis via de novo pathway; 5-amino-1-(5-phospho-D-ribosyl)imidazole from N(2)-formyl-N(1)-(5-phospho-D-ribosyl)glycinamide: step 2/2. The protein is Phosphoribosylformylglycinamidine cyclo-ligase of Bacillus cereus (strain ATCC 10987 / NRS 248).